Reading from the N-terminus, the 391-residue chain is Tryptophan synthase beta chain 2 (391 aa).

Lys83 carries the post-translational modification N6-(pyridoxal phosphate)lysine.

This sequence belongs to the TrpB family. As to quaternary structure, tetramer of two alpha and two beta chains. The cofactor is pyridoxal 5'-phosphate.

It carries out the reaction (1S,2R)-1-C-(indol-3-yl)glycerol 3-phosphate + L-serine = D-glyceraldehyde 3-phosphate + L-tryptophan + H2O. It participates in amino-acid biosynthesis; L-tryptophan biosynthesis; L-tryptophan from chorismate: step 5/5. Functionally, the beta subunit is responsible for the synthesis of L-tryptophan from indole and L-serine. In Chlamydia caviae (strain ATCC VR-813 / DSM 19441 / 03DC25 / GPIC) (Chlamydophila caviae), this protein is Tryptophan synthase beta chain 2 (trpB2).